The primary structure comprises 127 residues: uncharacterized protein (127 aa).

Positions 1 to 13 (MEAGNRSGTPQHR) are enriched in polar residues. The tract at residues 1 to 26 (MEAGNRSGTPQHRQLSEIRQDLSSSP) is disordered.

This is an uncharacterized protein from Saccharomyces cerevisiae (strain ATCC 204508 / S288c) (Baker's yeast).